The chain runs to 445 residues: Glutamate-1-semialdehyde 2,1-aminomutase (445 aa).

N6-(pyridoxal phosphate)lysine is present on K281.

Belongs to the class-III pyridoxal-phosphate-dependent aminotransferase family. HemL subfamily. As to quaternary structure, homodimer. Requires pyridoxal 5'-phosphate as cofactor.

The protein localises to the cytoplasm. It catalyses the reaction (S)-4-amino-5-oxopentanoate = 5-aminolevulinate. The protein operates within porphyrin-containing compound metabolism; protoporphyrin-IX biosynthesis; 5-aminolevulinate from L-glutamyl-tRNA(Glu): step 2/2. The sequence is that of Glutamate-1-semialdehyde 2,1-aminomutase from Nocardioides sp. (strain ATCC BAA-499 / JS614).